A 237-amino-acid chain; its full sequence is Protein FEV (237 aa).

Residues 47–127 constitute a DNA-binding region (ETS); that stretch reads IQLWQFLLEL…HGKRYAYRFD (81 aa). The tract at residues 129–237 is may mediate active transcriptional repression; it reads QGLAQACQPP…AASHLGGHYH (109 aa).

This sequence belongs to the ETS family. In terms of tissue distribution, expressed in central serotonergic neurons.

The protein resides in the nucleus. Its function is as follows. Functions as a transcriptional regulator. May function as a transcriptional repressor. Functions in the differentiation and the maintenance of the central serotonergic neurons. May play a role in cell growth. The sequence is that of Protein FEV (Fev) from Mus musculus (Mouse).